Here is a 304-residue protein sequence, read N- to C-terminus: Acetylglutamate kinase (304 aa).

Substrate is bound by residues 77–78, Arg99, and Asn201; that span reads GG.

This sequence belongs to the acetylglutamate kinase family. ArgB subfamily.

It localises to the cytoplasm. It carries out the reaction N-acetyl-L-glutamate + ATP = N-acetyl-L-glutamyl 5-phosphate + ADP. Its pathway is amino-acid biosynthesis; L-arginine biosynthesis; N(2)-acetyl-L-ornithine from L-glutamate: step 2/4. Catalyzes the ATP-dependent phosphorylation of N-acetyl-L-glutamate. The polypeptide is Acetylglutamate kinase (Methylibium petroleiphilum (strain ATCC BAA-1232 / LMG 22953 / PM1)).